The chain runs to 155 residues: Ribosome maturation factor RimP (155 aa).

It belongs to the RimP family.

Its subcellular location is the cytoplasm. Required for maturation of 30S ribosomal subunits. The polypeptide is Ribosome maturation factor RimP (Hamiltonella defensa subsp. Acyrthosiphon pisum (strain 5AT)).